The chain runs to 223 residues: Ribosome maturation factor RimM (223 aa).

The 82-residue stretch at 142-223 (ADEFYWVDLI…RIVVDWEADY (82 aa)) folds into the PRC barrel domain.

The protein belongs to the RimM family. As to quaternary structure, binds ribosomal protein uS19.

It localises to the cytoplasm. In terms of biological role, an accessory protein needed during the final step in the assembly of 30S ribosomal subunit, possibly for assembly of the head region. Essential for efficient processing of 16S rRNA. May be needed both before and after RbfA during the maturation of 16S rRNA. It has affinity for free ribosomal 30S subunits but not for 70S ribosomes. This chain is Ribosome maturation factor RimM, found in Burkholderia multivorans (strain ATCC 17616 / 249).